Here is a 123-residue protein sequence, read N- to C-terminus: Cytochrome b-c1 complex subunit 7 (123 aa).

This sequence belongs to the UQCRB/QCR7 family. In terms of assembly, component of the ubiquinol-cytochrome c oxidoreductase (cytochrome b-c1 complex, complex III, CIII), a multisubunit enzyme composed of 3 respiratory subunits cytochrome b, cytochrome c1 and Rieske protein, 2 core protein subunits, and additional low-molecular weight protein subunits. The complex exists as an obligatory dimer and forms supercomplexes (SCs) in the inner mitochondrial membrane with cytochrome c oxidase (complex IV, CIV). The N-terminus is blocked.

The protein resides in the mitochondrion inner membrane. Functionally, component of the ubiquinol-cytochrome c oxidoreductase, a multisubunit transmembrane complex that is part of the mitochondrial electron transport chain which drives oxidative phosphorylation. The respiratory chain contains 3 multisubunit complexes succinate dehydrogenase (complex II, CII), ubiquinol-cytochrome c oxidoreductase (cytochrome b-c1 complex, complex III, CIII) and cytochrome c oxidase (complex IV, CIV), that cooperate to transfer electrons derived from NADH and succinate to molecular oxygen, creating an electrochemical gradient over the inner membrane that drives transmembrane transport and the ATP synthase. The cytochrome b-c1 complex catalyzes electron transfer from ubiquinol to cytochrome c, linking this redox reaction to translocation of protons across the mitochondrial inner membrane, with protons being carried across the membrane as hydrogens on the quinol. In the process called Q cycle, 2 protons are consumed from the matrix, 4 protons are released into the intermembrane space and 2 electrons are passed to cytochrome c. This Solanum tuberosum (Potato) protein is Cytochrome b-c1 complex subunit 7.